A 508-amino-acid polypeptide reads, in one-letter code: 2-isopropylmalate synthase (508 aa).

In terms of domain architecture, Pyruvate carboxyltransferase spans 5–267 (IKIFDTTLRD…THRIDTTQIY (263 aa)). Mn(2+) is bound by residues aspartate 14, histidine 202, histidine 204, and asparagine 238. The tract at residues 390-508 (VIDSFQINSG…SEIGESIISQ (119 aa)) is regulatory domain.

Belongs to the alpha-IPM synthase/homocitrate synthase family. LeuA type 1 subfamily. As to quaternary structure, homodimer. Mn(2+) serves as cofactor.

It is found in the cytoplasm. It carries out the reaction 3-methyl-2-oxobutanoate + acetyl-CoA + H2O = (2S)-2-isopropylmalate + CoA + H(+). It functions in the pathway amino-acid biosynthesis; L-leucine biosynthesis; L-leucine from 3-methyl-2-oxobutanoate: step 1/4. In terms of biological role, catalyzes the condensation of the acetyl group of acetyl-CoA with 3-methyl-2-oxobutanoate (2-ketoisovalerate) to form 3-carboxy-3-hydroxy-4-methylpentanoate (2-isopropylmalate). In Ruminiclostridium cellulolyticum (strain ATCC 35319 / DSM 5812 / JCM 6584 / H10) (Clostridium cellulolyticum), this protein is 2-isopropylmalate synthase.